A 440-amino-acid chain; its full sequence is Ribosomal protein uS12 methylthiotransferase RimO (440 aa).

The MTTase N-terminal domain maps to 6-116; sequence PKVGFVSLGC…VVTAVHEVVP (111 aa). Cys15, Cys51, Cys80, Cys149, Cys153, and Cys156 together coordinate [4Fe-4S] cluster. Residues 135-373 form the Radical SAM core domain; sequence LTPRHYAYLK…MAHQQAISAA (239 aa). The 65-residue stretch at 376-440 folds into the TRAM domain; the sequence is QLKVGKEIEV…DEYDLWAEPV (65 aa).

Belongs to the methylthiotransferase family. RimO subfamily. The cofactor is [4Fe-4S] cluster.

The protein resides in the cytoplasm. It catalyses the reaction L-aspartate(89)-[ribosomal protein uS12]-hydrogen + (sulfur carrier)-SH + AH2 + 2 S-adenosyl-L-methionine = 3-methylsulfanyl-L-aspartate(89)-[ribosomal protein uS12]-hydrogen + (sulfur carrier)-H + 5'-deoxyadenosine + L-methionine + A + S-adenosyl-L-homocysteine + 2 H(+). In terms of biological role, catalyzes the methylthiolation of an aspartic acid residue of ribosomal protein uS12. This Pseudomonas paraeruginosa (strain DSM 24068 / PA7) (Pseudomonas aeruginosa (strain PA7)) protein is Ribosomal protein uS12 methylthiotransferase RimO.